The sequence spans 84 residues: Dolichol phosphate-mannose biosynthesis regulatory protein (84 aa).

Helical transmembrane passes span 11–31 and 49–69; these read FGLV…VILL and YAVL…GLFI.

The protein belongs to the DPM2 family. In terms of assembly, component of the dolichol-phosphate mannose (DPM) synthase complex composed of DPM1, DPM2 and DPM3; in the complex interacts directly with DPM3. Component of the glycosylphosphatidylinositol-N-acetylglucosaminyltransferase (GPI-GnT) complex composed at least by PIGA, PIGC, PIGH, PIGP, PIGQ, PIGY and DPM2. Interacts with PIGA, PIGC and PIGQ.

The protein resides in the endoplasmic reticulum membrane. Its pathway is protein modification; protein glycosylation. Functionally, regulates the biosynthesis of dolichol phosphate-mannose. Regulatory subunit of the dolichol-phosphate mannose (DPM) synthase complex; essential for the ER localization and stable expression of DPM1. Part of the glycosylphosphatidylinositol-N-acetylglucosaminyltransferase (GPI-GnT) complex that catalyzes the transfer of N-acetylglucosamine from UDP-N-acetylglucosamine to phosphatidylinositol and participates in the first step of GPI biosynthesis. May act by regulating the GPI-GNT complex. The chain is Dolichol phosphate-mannose biosynthesis regulatory protein from Cricetulus griseus (Chinese hamster).